The sequence spans 314 residues: Aspartate carbamoyltransferase catalytic subunit (314 aa).

The carbamoyl phosphate site is built by R64 and T65. An L-aspartate-binding site is contributed by K92. The carbamoyl phosphate site is built by R114, H142, and Q145. Residues R175 and R230 each contribute to the L-aspartate site. Positions 271 and 272 each coordinate carbamoyl phosphate.

This sequence belongs to the aspartate/ornithine carbamoyltransferase superfamily. ATCase family. Heterododecamer (2C3:3R2) of six catalytic PyrB chains organized as two trimers (C3), and six regulatory PyrI chains organized as three dimers (R2).

It carries out the reaction carbamoyl phosphate + L-aspartate = N-carbamoyl-L-aspartate + phosphate + H(+). Its pathway is pyrimidine metabolism; UMP biosynthesis via de novo pathway; (S)-dihydroorotate from bicarbonate: step 2/3. Its function is as follows. Catalyzes the condensation of carbamoyl phosphate and aspartate to form carbamoyl aspartate and inorganic phosphate, the committed step in the de novo pyrimidine nucleotide biosynthesis pathway. The polypeptide is Aspartate carbamoyltransferase catalytic subunit (Deinococcus radiodurans (strain ATCC 13939 / DSM 20539 / JCM 16871 / CCUG 27074 / LMG 4051 / NBRC 15346 / NCIMB 9279 / VKM B-1422 / R1)).